The sequence spans 476 residues: Protein transport protein Sec61 subunit alpha isoform 1 (476 aa).

Residues 1–33 (MGIKFLEVIKPFCVILPEIQKPERKIQFKEKVL) lie on the Cytoplasmic side of the membrane. A helical transmembrane segment spans residues 34 to 53 (WTAITLFIFLVCCQIPLFGI). Residues 54-76 (MSSDSADPFYWMRVILASNRGTL) are Lumenal-facing. The chain crosses the membrane as a helical span at residues 77-96 (MELGISPIVTSGLIMQLLAG). Over 97–117 (AKIIEVGDTPKDRALFNGAQK) the chain is Cytoplasmic. The helical transmembrane segment at 118–138 (LFGMTITIGQSIVYVMTGMYG) threads the bilayer. Over 139-144 (DPSEMG) the chain is Lumenal. Residues 145-165 (AGVCLLITIQLFVAGLIVLLL) form a helical membrane-spanning segment. At 166-172 (DELLQKG) the chain is on the cytoplasmic side. A helical transmembrane segment spans residues 173 to 193 (YGLGSGISLFIATNICETIVW). The Lumenal segment spans residues 194-240 (KAFSPTTVNTGRGMEFEGAIIALFHLLATRTDKVRALREAFYRQNLP). A helical membrane pass occupies residues 241–261 (NLMNLIATIFVFAVVIYFQGF). Over 262-288 (RVDLPIKSARYRGQYNTYPIKLFYTSN) the chain is Cytoplasmic. A helical membrane pass occupies residues 289 to 309 (IPIILQSALVSNLYVISQMLS). Residues 310–354 (ARFSGNLLVSLLGTWSDTSSGGPARAYPVGGLCYYLSPPESFGSV) lie on the Lumenal side of the membrane. The chain crosses the membrane as a helical span at residues 355-375 (LEDPVHAVVYIVFMLGSCAFF). Topologically, residues 376 to 420 (SKTWIEVSGSSAKDVAKQLKEQQMVMRGHRETSMVHELNRYIPTA) are cytoplasmic. A helical transmembrane segment spans residues 421-441 (AAFGGLCIGALSVLADFLGAI). Residues 442 to 445 (GSGT) are Lumenal-facing. A helical transmembrane segment spans residues 446–462 (GILLAVTIIYQYFEIFV). At 463–476 (KEQSEVGSMGALLF) the chain is on the cytoplasmic side.

It belongs to the SecY/SEC61-alpha family. As to quaternary structure, the SEC61 channel-forming translocon complex consists of channel-forming core components SEC61A1, SEC61B and SEC61G and different auxiliary components such as SEC62 and SEC63. The SEC61 channel associates with the multi-pass translocon (MPT) complex.

The protein localises to the endoplasmic reticulum membrane. Component of SEC61 channel-forming translocon complex that mediates transport of signal peptide-containing precursor polypeptides across the endoplasmic reticulum (ER). Forms a ribosome receptor and a gated pore in the ER membrane, both functions required for cotranslational translocation of nascent polypeptides. May cooperate with auxiliary protein SEC62, SEC63 and HSPA5/BiP to enable post-translational transport of small presecretory proteins. The SEC61 channel is also involved in ER membrane insertion of transmembrane proteins: it mediates membrane insertion of the first few transmembrane segments of proteins, while insertion of subsequent transmembrane regions of multi-pass membrane proteins is mediated by the multi-pass translocon (MPT) complex. The SEC61 channel cooperates with the translocating protein TRAM1 to import nascent proteins into the ER. Controls the passive efflux of calcium ions from the ER lumen to the cytosol through SEC61 channel, contributing to the maintenance of cellular calcium homeostasis. Plays a critical role in nephrogenesis, specifically at pronephros stage. This chain is Protein transport protein Sec61 subunit alpha isoform 1 (SEC61A1), found in Bos taurus (Bovine).